We begin with the raw amino-acid sequence, 394 residues long: MGIKGLTKLIADNAHGAVKEQKFENYFGRKIAIDASMSIYQFLIVVGRSGSELLTNDAGEVTSHLQGMFNRTIRVLEAGLKPVYVFDGQPPDLKKRELAKRFARREDAAEDLVTAKETGNEADVEKYSKKTVKVTKQHNEDCRKLLRLMGVPVVEAPSEAEAECASLCKAEKVFAVASEDMDSLTYGSTRFLRHLMEPTSRKLPVLEFDIAKVLEGLGLNMDQFVDLCILCGCDYCDTIRGIGPQTALKMIRQHGSLEIVLENLNKDRYQVPDPWPYQEARRLFKEPLVTPPEKVPEFKWTAPDTEGLRQLLVEENGFNNDRVMKAIEKLKVAKNKASQGRLESFFGVSSSSSNKRKEAPDSEASAGKQVKTAAAVKPAKAASKKGPAKGGKKK.

An N-domain region spans residues 1-105 (MGIKGLTKLI…RELAKRFARR (105 aa)). Residue aspartate 34 coordinates Mg(2+). Residue arginine 71 participates in DNA binding. Mg(2+)-binding residues include aspartate 87, glutamate 159, glutamate 161, aspartate 180, and aspartate 182. The segment at 123-254 (DVEKYSKKTV…QTALKMIRQH (132 aa)) is I-domain. Residue glutamate 159 participates in DNA binding. Positions 232 and 234 each coordinate DNA. Aspartate 234 contributes to the Mg(2+) binding site. The interval 338–346 (SQGRLESFF) is interaction with PCNA. Positions 343-394 (ESFFGVSSSSSNKRKEAPDSEASAGKQVKTAAAVKPAKAASKKGPAKGGKKK) are disordered. Low complexity predominate over residues 368-381 (KQVKTAAAVKPAKA). A compositionally biased stretch (basic residues) spans 382–394 (ASKKGPAKGGKKK).

This sequence belongs to the XPG/RAD2 endonuclease family. FEN1 subfamily. Interacts with PCNA. Three molecules of FEN1 bind to one PCNA trimer with each molecule binding to one PCNA monomer. PCNA stimulates the nuclease activity without altering cleavage specificity. The cofactor is Mg(2+). In terms of processing, phosphorylated. Phosphorylation upon DNA damage induces relocalization to the nuclear plasma.

Its subcellular location is the nucleus. The protein localises to the nucleolus. It is found in the nucleoplasm. It localises to the mitochondrion. Its function is as follows. Structure-specific nuclease with 5'-flap endonuclease and 5'-3' exonuclease activities involved in DNA replication and repair. During DNA replication, cleaves the 5'-overhanging flap structure that is generated by displacement synthesis when DNA polymerase encounters the 5'-end of a downstream Okazaki fragment. It enters the flap from the 5'-end and then tracks to cleave the flap base, leaving a nick for ligation. Also involved in the long patch base excision repair (LP-BER) pathway, by cleaving within the apurinic/apyrimidinic (AP) site-terminated flap. Acts as a genome stabilization factor that prevents flaps from equilibrating into structures that lead to duplications and deletions. Also possesses 5'-3' exonuclease activity on nicked or gapped double-stranded DNA, and exhibits RNase H activity. Also involved in replication and repair of rDNA and in repairing mitochondrial DNA. In Physcomitrium patens (Spreading-leaved earth moss), this protein is Flap endonuclease 1-A.